Consider the following 793-residue polypeptide: uncharacterized protein (793 aa).

Residues 1-21 (MLKKTLLAYTIGFAFSPPANA) form the signal peptide. A disulfide bond links C769 and C792.

This sequence belongs to the fimbrial export usher family.

The protein resides in the cell outer membrane. Its function is as follows. Involved in the export and assembly of a fimbrial subunit across the outer membrane. This is an uncharacterized protein from Escherichia coli (strain K12).